A 230-amino-acid polypeptide reads, in one-letter code: Aquaporin Z (230 aa).

A run of 2 helical transmembrane segments spans residues 9–29 (AELIGTFWLVLGGCGSAVLAA) and 35–55 (IGVLGVAFAFGLTVLTMAFAI). The short motif at 64-66 (NPA) is the NPA 1 element. Transmembrane regions (helical) follow at residues 83–103 (LPYVIAQVIGAILAAGVIYLI), 131–151 (LGAGFVSEVVMTAMFLVVIMG), and 160–180 (GFAPIAIGLALTLIHLISIPV). The short motif at 186–188 (NPA) is the NPA 2 element. A helical transmembrane segment spans residues 194–214 (ALFVGGWALQQLWLFWVAPLI).

This sequence belongs to the MIP/aquaporin (TC 1.A.8) family. As to quaternary structure, homotetramer.

Its subcellular location is the cell inner membrane. The catalysed reaction is H2O(in) = H2O(out). In terms of biological role, channel that permits osmotically driven movement of water in both directions. It is involved in the osmoregulation and in the maintenance of cell turgor during volume expansion in rapidly growing cells. It mediates rapid entry or exit of water in response to abrupt changes in osmolarity. This is Aquaporin Z from Pseudomonas putida (strain ATCC 47054 / DSM 6125 / CFBP 8728 / NCIMB 11950 / KT2440).